We begin with the raw amino-acid sequence, 738 residues long: Ethylene receptor (738 aa).

The next 3 membrane-spanning stretches (helical) occupy residues 23–43, 54–74, and 92–112; these read ISDFFIALAYFSIPLELIYFV, VLVQFGAFIVLCGATHLINLW, and VLTAVVSCATALMLVHIIPDL. 2 residues coordinate Cu cation: Cys65 and His69. In terms of domain architecture, GAF spans 158-307; that stretch reads DRHTILKTTL…VVADQVAVAL (150 aa). A Histidine kinase domain is found at 350 to 589; the sequence is VMNHEMRTPM…IFIVKLGFAE (240 aa). His353 is modified (phosphohistidine; by autocatalysis). A Response regulatory domain is found at 612–729; it reads PGLKVLVMDD…KMRSVLSELL (118 aa). At Asp660 the chain carries 4-aspartylphosphate.

The protein belongs to the ethylene receptor family. In terms of assembly, homodimer; disulfide-linked. It depends on Cu cation as a cofactor. In terms of processing, activation probably requires a transfer of a phosphate group between a His in the transmitter domain and an Asp of the receiver domain.

The protein resides in the endoplasmic reticulum membrane. The catalysed reaction is ATP + protein L-histidine = ADP + protein N-phospho-L-histidine.. Its function is as follows. May act early in the ethylene signal transduction pathway, possibly as an ethylene receptor, or as a regulator of the pathway. The protein is Ethylene receptor (ETR1) of Prunus persica (Peach).